A 110-amino-acid polypeptide reads, in one-letter code: Cytochrome c6 (110 aa).

The N-terminal stretch at 1-25 (MKKTLSVLFTAFSFCVIGFTQVAFA) is a signal peptide. Heme c is bound by residues Cys-39, Cys-42, His-43, and Met-83.

The protein belongs to the cytochrome c family. PetJ subfamily. As to quaternary structure, monomer. In terms of processing, binds 1 heme c group covalently per subunit.

It is found in the plastid. The protein localises to the chloroplast thylakoid lumen. Its function is as follows. Functions as an electron carrier between membrane-bound cytochrome b6-f and photosystem I in oxygenic photosynthesis. The sequence is that of Cytochrome c6 (petJ) from Porphyra purpurea (Red seaweed).